Consider the following 125-residue polypeptide: Large ribosomal subunit protein bL12 (125 aa).

Belongs to the bacterial ribosomal protein bL12 family. In terms of assembly, homodimer. Part of the ribosomal stalk of the 50S ribosomal subunit. Forms a multimeric L10(L12)X complex, where L10 forms an elongated spine to which 2 to 4 L12 dimers bind in a sequential fashion. Binds GTP-bound translation factors.

Its function is as follows. Forms part of the ribosomal stalk which helps the ribosome interact with GTP-bound translation factors. Is thus essential for accurate translation. The protein is Large ribosomal subunit protein bL12 of Francisella tularensis subsp. tularensis (strain SCHU S4 / Schu 4).